Reading from the N-terminus, the 321-residue chain is Mitochondrial thiamine pyrophosphate carrier 1 (321 aa).

3 Solcar repeats span residues 12-110 (GSRQ…ISQM), 121-207 (PSSA…LKPV), and 216-311 (PLGS…AMGI). Helical transmembrane passes span 17–38 (VVVAGAAAGLVSRFVIAPLDVI), 91–107 (LLYLTYGSVQFSAYTNI), 127–147 (FISGAGAGAAATTVTYPLDLL), 182–199 (GLGAGVSQIVPYMGLFFA), 213–231 (LPLPLGSSDAVAGVVASVV), and 286–303 (GLTVSLLKAAPASAVTMW).

Belongs to the mitochondrial carrier (TC 2.A.29) family.

It localises to the mitochondrion inner membrane. Its function is as follows. Mitochondrial transporter that mediates uptake of thiamine pyrophosphate (ThPP) into mitochondria. This Phaeosphaeria nodorum (strain SN15 / ATCC MYA-4574 / FGSC 10173) (Glume blotch fungus) protein is Mitochondrial thiamine pyrophosphate carrier 1 (TPC1).